Consider the following 159-residue polypeptide: 2-C-methyl-D-erythritol 2,4-cyclodiphosphate synthase (159 aa).

A divalent metal cation contacts are provided by Asp-9 and His-11. Residues 9–11 (DVH) and 35–36 (HS) each bind 4-CDP-2-C-methyl-D-erythritol 2-phosphate. His-43 contributes to the a divalent metal cation binding site. 4-CDP-2-C-methyl-D-erythritol 2-phosphate is bound by residues 57–59 (DIG), 62–66 (FPDTD), 133–136 (TTTE), Phe-140, and Arg-143.

This sequence belongs to the IspF family. As to quaternary structure, homotrimer. A divalent metal cation serves as cofactor.

It carries out the reaction 4-CDP-2-C-methyl-D-erythritol 2-phosphate = 2-C-methyl-D-erythritol 2,4-cyclic diphosphate + CMP. Its pathway is isoprenoid biosynthesis; isopentenyl diphosphate biosynthesis via DXP pathway; isopentenyl diphosphate from 1-deoxy-D-xylulose 5-phosphate: step 4/6. In terms of biological role, involved in the biosynthesis of isopentenyl diphosphate (IPP) and dimethylallyl diphosphate (DMAPP), two major building blocks of isoprenoid compounds. Catalyzes the conversion of 4-diphosphocytidyl-2-C-methyl-D-erythritol 2-phosphate (CDP-ME2P) to 2-C-methyl-D-erythritol 2,4-cyclodiphosphate (ME-CPP) with a corresponding release of cytidine 5-monophosphate (CMP). The protein is 2-C-methyl-D-erythritol 2,4-cyclodiphosphate synthase of Mannheimia succiniciproducens (strain KCTC 0769BP / MBEL55E).